Here is a 189-residue protein sequence, read N- to C-terminus: Cell division protein SepF (189 aa).

A disordered region spans residues 18–64; that stretch reads EVTDHEDVAKERPVKVQKTEQTPSQQQRKPERPQETVPPRRQHIKSD. Basic and acidic residues predominate over residues 22-35; that stretch reads HEDVAKERPVKVQK.

It belongs to the SepF family. Homodimer. Interacts with FtsZ.

The protein resides in the cytoplasm. In terms of biological role, cell division protein that is part of the divisome complex and is recruited early to the Z-ring. Probably stimulates Z-ring formation, perhaps through the cross-linking of FtsZ protofilaments. Its function overlaps with FtsA. The polypeptide is Cell division protein SepF (Streptococcus thermophilus (strain ATCC BAA-250 / LMG 18311)).